The chain runs to 273 residues: Vacuolar iron transporter (273 aa).

Residues 1 to 47 (MVSKKTIEARKAYYNEDVVLSKEAHDFYHNLDKHGENHNLDKDNLKT) lie on the Cytoplasmic side of the membrane. The helical transmembrane segment at 48–68 (IIFGSLDGIITIFAIVSGCVG) threads the bilayer. Residues 69 to 75 (AKITPTQ) lie on the Vacuolar side of the membrane. A helical transmembrane segment spans residues 76–96 (VIIIGIGNLFANAISMGFSEY). Topologically, residues 97-181 (TSSTAQRDFM…NEDKNECLKK (85 aa)) are cytoplasmic. 6 residues coordinate Fe cation: glutamate 113, glutamate 116, glutamate 124, glutamate 127, methionine 161, and glutamate 165. The helical transmembrane segment at 182-202 (GIIMFLSFAVFGIIPLSAYVA) threads the bilayer. Topologically, residues 203–212 (YTVFFGYTDY) are vacuolar. Residues 213 to 233 (TTSFLVVFISTLTTLFILGLF) traverse the membrane as a helical segment. At 234 to 246 (KSQFTNQKPITCA) the chain is on the cytoplasmic side. A helical transmembrane segment spans residues 247–267 (LYMVLNGMIAGMVPFLLGVVL). Over 268-273 (KNNISE) the chain is Vacuolar.

This sequence belongs to the CCC1 family. In terms of assembly, monomer.

It localises to the vacuole membrane. Its subcellular location is the endoplasmic reticulum membrane. The protein localises to the cytoplasmic vesicle membrane. It carries out the reaction Fe(2+)(in) = Fe(2+)(out). Its function is as follows. Vacuolar iron transporter involved in the transfer of iron ions from the cytosol to the vacuole for intracellular iron storage. Involved in detoxification of excess iron. The transport mechanism is not well defined and the role of protons is not clear. This is Vacuolar iron transporter from Plasmodium falciparum (isolate 3D7).